We begin with the raw amino-acid sequence, 587 residues long: Membrane protein insertase YidC (587 aa).

Helical transmembrane passes span 5 to 25, 365 to 385, 430 to 450, 480 to 500, and 516 to 536; these read SVIG…FMKP, GLII…LSLA, LGGC…FYVF, LPLY…TVFF, and IMIW…PSGL.

It belongs to the OXA1/ALB3/YidC family. Type 1 subfamily. Interacts with the Sec translocase complex via SecD. Specifically interacts with transmembrane segments of nascent integral membrane proteins during membrane integration.

It is found in the cell inner membrane. Its function is as follows. Required for the insertion and/or proper folding and/or complex formation of integral membrane proteins into the membrane. Involved in integration of membrane proteins that insert both dependently and independently of the Sec translocase complex, as well as at least some lipoproteins. Aids folding of multispanning membrane proteins. The chain is Membrane protein insertase YidC from Chlorobaculum parvum (strain DSM 263 / NCIMB 8327) (Chlorobium vibrioforme subsp. thiosulfatophilum).